Consider the following 320-residue polypeptide: Adenosine receptor A3 (320 aa).

Residues 1–16 (MKANNTTTSALWLQIT) are Extracellular-facing. Residues Asn-4 and Asn-5 are each glycosylated (N-linked (GlcNAc...) asparagine). The helical transmembrane segment at 17 to 39 (YITMEAAIGLCAVVGNMLVIWVV) threads the bilayer. Topologically, residues 40-50 (KLNRTLRTTTF) are cytoplasmic. A helical membrane pass occupies residues 51–74 (YFIVSLALADIAVGVLVIPLAIAV). The Extracellular segment spans residues 75 to 86 (SLEVQMHFYACL). A disulfide bridge connects residues Cys-85 and Cys-168. Residues 87-108 (FMSCVLLVFTHASIMSLLAIAV) form a helical membrane-spanning segment. Residues 109–128 (DRYLRVKLTVRYRTVTTQRR) lie on the Cytoplasmic side of the membrane. Residues 129 to 150 (IWLFLGLCWLVSFLVGLTPMFG) form a helical membrane-spanning segment. The Extracellular segment spans residues 151-179 (WNRKVTLELSQNSSTLSCHFRSVVGLDYM). The helical transmembrane segment at 180–200 (VFFSFITWILIPLVVMCIIYL) threads the bilayer. Residues 201–233 (DIFYIIRNKLSQNLTGFRETRAFYGREFKTAKS) are Cytoplasmic-facing. The chain crosses the membrane as a helical span at residues 234-257 (LFLVLFLFALCWLPLSIINFVSYF). Residues 258-263 (NVKIPE) are Extracellular-facing. Residues 264–286 (IAMCLGILLSHANSMMNPIVYAC) traverse the membrane as a helical segment. Residues 287–320 (KIKKFKETYFVILRACRLCQTSDSLDSNLEQTTE) lie on the Cytoplasmic side of the membrane. Cys-305 is lipidated: S-palmitoyl cysteine. A phosphothreonine mark is found at Thr-307, Thr-318, and Thr-319.

The protein belongs to the G-protein coupled receptor 1 family. Post-translationally, phosphorylation on Thr-318 and Thr-319 may be crucial for rapid desensitization. Phosphorylation on Thr-318 may be necessary for phosphorylation on Thr-319 to occur. In terms of tissue distribution, testis, particularly in spermatocytes and spermatids but not in spermatogonia. Low levels in the brain.

The protein resides in the cell membrane. Receptor for adenosine. The activity of this receptor is mediated by G proteins which inhibits adenylyl cyclase. May play a role during reproduction. This chain is Adenosine receptor A3 (Adora3), found in Rattus norvegicus (Rat).